We begin with the raw amino-acid sequence, 156 residues long: Small ribosomal subunit protein uS7 (156 aa).

This sequence belongs to the universal ribosomal protein uS7 family. Part of the 30S ribosomal subunit. Contacts proteins S9 and S11.

Functionally, one of the primary rRNA binding proteins, it binds directly to 16S rRNA where it nucleates assembly of the head domain of the 30S subunit. Is located at the subunit interface close to the decoding center, probably blocks exit of the E-site tRNA. In Pseudoalteromonas translucida (strain TAC 125), this protein is Small ribosomal subunit protein uS7.